A 172-amino-acid chain; its full sequence is 6,7-dimethyl-8-ribityllumazine synthase (172 aa).

Residues Phe-24, 58–60, and 82–84 contribute to the 5-amino-6-(D-ribitylamino)uracil site; these read ALE and AVI. Residue 87–88 participates in (2S)-2-hydroxy-3-oxobutyl phosphate binding; that stretch reads ET. The active-site Proton donor is the His-90. Asn-115 serves as a coordination point for 5-amino-6-(D-ribitylamino)uracil. Residue Arg-129 participates in (2S)-2-hydroxy-3-oxobutyl phosphate binding. Positions 150–172 are disordered; it reads ALEQLDGDEDDEGEGEDDEEERA. The span at 154–172 shows a compositional bias: acidic residues; it reads LDGDEDDEGEGEDDEEERA.

This sequence belongs to the DMRL synthase family.

It catalyses the reaction (2S)-2-hydroxy-3-oxobutyl phosphate + 5-amino-6-(D-ribitylamino)uracil = 6,7-dimethyl-8-(1-D-ribityl)lumazine + phosphate + 2 H2O + H(+). The protein operates within cofactor biosynthesis; riboflavin biosynthesis; riboflavin from 2-hydroxy-3-oxobutyl phosphate and 5-amino-6-(D-ribitylamino)uracil: step 1/2. Functionally, catalyzes the formation of 6,7-dimethyl-8-ribityllumazine by condensation of 5-amino-6-(D-ribitylamino)uracil with 3,4-dihydroxy-2-butanone 4-phosphate. This is the penultimate step in the biosynthesis of riboflavin. The protein is 6,7-dimethyl-8-ribityllumazine synthase of Paraburkholderia phymatum (strain DSM 17167 / CIP 108236 / LMG 21445 / STM815) (Burkholderia phymatum).